Reading from the N-terminus, the 137-residue chain is Histone H2B (137 aa).

Residues methionine 1–proline 10 show a composition bias toward basic and acidic residues. The interval methionine 1 to glutamate 46 is disordered. N6-acetyllysine; alternate is present on residues lysine 8 and lysine 9. Glycyl lysine isopeptide (Lys-Gly) (interchain with G-Cter in SUMO); alternate cross-links involve residues lysine 8 and lysine 9. The residue at position 12 (serine 12) is a Phosphoserine. N6-acetyllysine is present on lysine 13. Lysine 24 carries the post-translational modification N6-acetyllysine; alternate. Lysine 24 is covalently cross-linked (Glycyl lysine isopeptide (Lys-Gly) (interchain with G-Cter in SUMO); alternate). Lysine 25 is covalently cross-linked (Glycyl lysine isopeptide (Lys-Gly) (interchain with G-Cter in SUMO)). Residue lysine 131 forms a Glycyl lysine isopeptide (Lys-Gly) (interchain with G-Cter in ubiquitin) linkage.

Belongs to the histone H2B family. As to quaternary structure, the nucleosome is a histone octamer containing two molecules each of H2A, H2B, H3 and H4 assembled in one H3-H4 heterotetramer and two H2A-H2B heterodimers. The octamer wraps approximately 147 bp of DNA. Post-translationally, monoubiquitinated by the UBC2-BRE1 complex to form H2BK123ub1. H2BK123ub1 gives a specific tag for epigenetic transcriptional activation and is also prerequisite for H3K4me and H3K79me formation. H2BK123ub1 also modulates the formation of double-strand breaks during meiosis and is a prerequisite for DNA-damage checkpoint activation. Phosphorylated to form H2BS10ph during progression through meiotic prophase. May be correlated with chromosome condensation. In terms of processing, acetylated by GCN5 to form H2BK11ac and H2BK16ac. H2BK16ac can also be formed by ESA1. Acetylation of N-terminal lysines and particularly formation of H2BK11acK16ac has a positive effect on transcription. Post-translationally, sumoylation to form H2BK6su or H2BK7su, and probably also H2BK16su or H2BK17su, occurs preferentially near the telomeres and represses gene transcription.

Its subcellular location is the nucleus. The protein localises to the chromosome. In terms of biological role, core component of nucleosome. Nucleosomes wrap and compact DNA into chromatin, limiting DNA accessibility to the cellular machineries which require DNA as a template. Histones thereby play a central role in transcription regulation, DNA repair, DNA replication and chromosomal stability. DNA accessibility is regulated via a complex set of post-translational modifications of histones, also called histone code, and nucleosome remodeling. This is Histone H2B (HTB1) from Gibberella zeae (strain ATCC MYA-4620 / CBS 123657 / FGSC 9075 / NRRL 31084 / PH-1) (Wheat head blight fungus).